A 239-amino-acid chain; its full sequence is MGNSALRAHVETAQKTGVFQLKDRGLTEFPADLQKLTSNLRTIDLSNNKIESLPPLLIGKFTLLKSLSLNNNKLTVLPDEICNLKKLETLSLNNNHLRELPSTFGQLSALKTLSLSGNQLGALPPQLCSLRHLDVMDLSKNQIRSIPDSVGELQVIELNLNQNQISQISVKISCCPRLKILRLEENCLELSMLPQSILSDSQICLLAVEGNLFEIKKLRELEGYDKYMERFTATKKKFA.

Gly2 is lipidated: N-myristoyl glycine. LRR repeat units follow at residues 39–60, 63–84, 86–107, 109–131, 132–153, 154–175, 177–197, and 202–222; these read NLRT…LIGK, LLKS…ICNL, KLET…FGQL, ALKT…CSLR, HLDV…VGEL, QVIE…ISCC, RLKI…PQSI, and QICL…RELE.

Its subcellular location is the membrane. The chain is Leucine-rich repeat-containing protein 57 (LRRC57) from Homo sapiens (Human).